The following is a 293-amino-acid chain: MIKSGFITIIGRPNVGKSTLLNSIMGEKLSIVSCKPQTTRNSIQTILTRDDFQLIFVDTPGIHKPKHKLGNYMVKVAESSVKDVDLILFLITPDVEVGKGDRYILEQLKKENIPVFLVVNKIDENPQEKVAQTLKNYSEIFDFAEIIPISALKQKNVKELVELMVKYMPEGPKYYPDDMITDKQEKFVVSEIIREKALRLLSKEVPHGIAVDILSMKKNSKGLYNIEATILCEKESHKGIIIGKKGAMLKKISTYAREDIEKFLDSKVYLEVWVKVKKEWRDSDRLLKELGYK.

Residues 3-170 (KSGFITIIGR…VELMVKYMPE (168 aa)) form the Era-type G domain. The G1 stretch occupies residues 11–18 (GRPNVGKS). Position 11-18 (11-18 (GRPNVGKS)) interacts with GTP. The interval 37 to 41 (QTTRN) is G2. Positions 58–61 (DTPG) are G3. GTP is bound by residues 58-62 (DTPGI) and 120-123 (NKID). A G4 region spans residues 120 to 123 (NKID). The G5 stretch occupies residues 149–151 (ISA). Positions 201–278 (LSKEVPHGIA…YLEVWVKVKK (78 aa)) constitute a KH type-2 domain.

This sequence belongs to the TRAFAC class TrmE-Era-EngA-EngB-Septin-like GTPase superfamily. Era GTPase family. As to quaternary structure, monomer.

It is found in the cytoplasm. The protein resides in the cell membrane. Its function is as follows. An essential GTPase that binds both GDP and GTP, with rapid nucleotide exchange. Plays a role in 16S rRNA processing and 30S ribosomal subunit biogenesis and possibly also in cell cycle regulation and energy metabolism. In Clostridium kluyveri (strain NBRC 12016), this protein is GTPase Era.